The following is a 567-amino-acid chain: DNA ligase (567 aa).

E260 contacts ATP. The active-site N6-AMP-lysine intermediate is the K262. The ATP site is built by R267, R282, E312, F352, R427, and K433.

This sequence belongs to the ATP-dependent DNA ligase family. Mg(2+) serves as cofactor.

The enzyme catalyses ATP + (deoxyribonucleotide)n-3'-hydroxyl + 5'-phospho-(deoxyribonucleotide)m = (deoxyribonucleotide)n+m + AMP + diphosphate.. Its function is as follows. DNA ligase that seals nicks in double-stranded DNA during DNA replication, DNA recombination and DNA repair. The polypeptide is DNA ligase (Methanococcoides burtonii (strain DSM 6242 / NBRC 107633 / OCM 468 / ACE-M)).